Here is a 328-residue protein sequence, read N- to C-terminus: DNA-directed RNA polymerase subunit alpha (328 aa).

Positions 1 to 232 (MHNSLAELIK…QHLAILVDLK (232 aa)) are alpha N-terminal domain (alpha-NTD). Residues 246-328 (FDPLLLHPVD…PPEGLKKLNQ (83 aa)) form an alpha C-terminal domain (alpha-CTD) region.

The protein belongs to the RNA polymerase alpha chain family. In terms of assembly, homodimer. The RNAP catalytic core consists of 2 alpha, 1 beta, 1 beta' and 1 omega subunit. When a sigma factor is associated with the core the holoenzyme is formed, which can initiate transcription.

The enzyme catalyses RNA(n) + a ribonucleoside 5'-triphosphate = RNA(n+1) + diphosphate. Functionally, DNA-dependent RNA polymerase catalyzes the transcription of DNA into RNA using the four ribonucleoside triphosphates as substrates. The protein is DNA-directed RNA polymerase subunit alpha of Methylococcus capsulatus (strain ATCC 33009 / NCIMB 11132 / Bath).